The primary structure comprises 125 residues: Protein ApaG (125 aa).

Residues 1–125 form the ApaG domain; the sequence is MINAPRVCVQ…FRLAIPSLIH (125 aa).

In Pectobacterium atrosepticum (strain SCRI 1043 / ATCC BAA-672) (Erwinia carotovora subsp. atroseptica), this protein is Protein ApaG.